A 397-amino-acid polypeptide reads, in one-letter code: Elongation factor Tu (397 aa).

Residues 10–207 (KPHLNIGTIG…AVDAYIPEPE (198 aa)) form the tr-type G domain. The G1 stretch occupies residues 19–26 (GHVDHGKT). Residue 19–26 (GHVDHGKT) coordinates GTP. Thr26 lines the Mg(2+) pocket. Residues 60-64 (GVTIN) are G2. Residues 81 to 84 (DCPG) form a G3 region. Residues 81–85 (DCPGH) and 136–139 (NKVD) each bind GTP. The tract at residues 136 to 139 (NKVD) is G4. A G5 region spans residues 174 to 176 (SAL).

This sequence belongs to the TRAFAC class translation factor GTPase superfamily. Classic translation factor GTPase family. EF-Tu/EF-1A subfamily. As to quaternary structure, monomer.

The protein localises to the cytoplasm. It catalyses the reaction GTP + H2O = GDP + phosphate + H(+). Its function is as follows. GTP hydrolase that promotes the GTP-dependent binding of aminoacyl-tRNA to the A-site of ribosomes during protein biosynthesis. In Syntrophus aciditrophicus (strain SB), this protein is Elongation factor Tu.